The primary structure comprises 1014 residues: Endogenous retrovirus group K member 10 Pol protein (1014 aa).

A Reverse transcriptase domain is found at 57–245; it reads LEKGHIEPSF…TPFHYLGMQI (189 aa). Residues 161-164 carry the LPQG motif; sequence LPQG. Positions 195–198 match the YXDD motif; the sequence is YIDD. In terms of domain architecture, RNase H type-1 spans 460-590; that stretch reads LENALTVFTD…ADLLVSSALI (131 aa). Positions 469, 497, 517, and 582 each coordinate Mg(2+). The segment at 587 to 628 adopts an Integrase-type zinc-finger fold; that stretch reads SALIKAQELHALTHVNAAGLKNKFDVTWKQAKDIVQHCTQCQ. Zn(2+) is bound by residues His-596, His-600, Cys-624, and Cys-627. An Integrase catalytic domain is found at 642-803; it reads RGLCPNALWQ…TSAEQHLTGK (162 aa). The integrase-type DNA-binding region spans 811-859; that stretch reads KLIWWKDNKNKTWEIGKVITWGRGFACVSPGENQLPVWLPTRHLKFYNE.

This sequence belongs to the beta type-B retroviral polymerase family. HERV class-II K(HML-2) pol subfamily.

It carries out the reaction DNA(n) + a 2'-deoxyribonucleoside 5'-triphosphate = DNA(n+1) + diphosphate. The enzyme catalyses Endonucleolytic cleavage to 5'-phosphomonoester.. Functionally, early post-infection, the reverse transcriptase converts the viral RNA genome into double-stranded viral DNA. The RNase H domain of the reverse transcriptase performs two functions. It degrades the RNA template and specifically removes the RNA primer from the RNA/DNA hybrid. Following nuclear import, the integrase catalyzes the insertion of the linear, double-stranded viral DNA into the host cell chromosome. Endogenous Pol proteins may have kept, lost or modified their original function during evolution. This Homo sapiens (Human) protein is Endogenous retrovirus group K member 10 Pol protein (ERVK-10).